We begin with the raw amino-acid sequence, 305 residues long: Ornithine carbamoyltransferase, anabolic (305 aa).

Carbamoyl phosphate contacts are provided by residues 53 to 56 (STRT), Q80, R104, and 131 to 134 (HPCQ). Residues N162, D219, and 223 to 224 (SM) each bind L-ornithine. Residues 259 to 260 (CL) and R287 contribute to the carbamoyl phosphate site.

It belongs to the aspartate/ornithine carbamoyltransferase superfamily. OTCase family. As to quaternary structure, homotrimer.

It localises to the cytoplasm. The enzyme catalyses carbamoyl phosphate + L-ornithine = L-citrulline + phosphate + H(+). It participates in amino-acid biosynthesis; L-arginine biosynthesis; L-arginine from L-ornithine and carbamoyl phosphate: step 1/3. Its function is as follows. Reversibly catalyzes the transfer of the carbamoyl group from carbamoyl phosphate (CP) to the N(epsilon) atom of ornithine (ORN) to produce L-citrulline, which is a substrate for argininosuccinate synthetase (ArgG) involved in the final step in arginine biosynthesis. This chain is Ornithine carbamoyltransferase, anabolic, found in Pseudomonas aeruginosa (strain ATCC 15692 / DSM 22644 / CIP 104116 / JCM 14847 / LMG 12228 / 1C / PRS 101 / PAO1).